A 470-amino-acid chain; its full sequence is NADH-quinone oxidoreductase subunit D (470 aa).

Residues 1–18 are compositionally biased toward low complexity; it reads MTPSTSTPHTSTAPHTST. The segment at 1-37 is disordered; it reads MTPSTSTPHTSTAPHTSTGQSTDGAAQPGDGSSAYEA.

It belongs to the complex I 49 kDa subunit family. NDH-1 is composed of 14 different subunits. Subunits NuoB, C, D, E, F, and G constitute the peripheral sector of the complex.

It is found in the cell membrane. The enzyme catalyses a quinone + NADH + 5 H(+)(in) = a quinol + NAD(+) + 4 H(+)(out). Functionally, NDH-1 shuttles electrons from NADH, via FMN and iron-sulfur (Fe-S) centers, to quinones in the respiratory chain. The immediate electron acceptor for the enzyme in this species is believed to be a menaquinone. Couples the redox reaction to proton translocation (for every two electrons transferred, four hydrogen ions are translocated across the cytoplasmic membrane), and thus conserves the redox energy in a proton gradient. The chain is NADH-quinone oxidoreductase subunit D from Frankia alni (strain DSM 45986 / CECT 9034 / ACN14a).